We begin with the raw amino-acid sequence, 215 residues long: Glutathione S-transferase D4 (215 aa).

The region spanning 1-80 is the GST N-terminal domain; the sequence is MDFYYSPRSS…YLVEKYGKDD (80 aa). Glutathione is bound by residues serine 9, 50 to 52, and 64 to 66; these read HTI and ESR. The GST C-terminal domain occupies 86–207; that stretch reads DPQKRALINQ…KGLLQMKTMY (122 aa).

This sequence belongs to the GST superfamily. Delta family. In terms of assembly, homodimer.

The enzyme catalyses RX + glutathione = an S-substituted glutathione + a halide anion + H(+). In terms of biological role, conjugation of reduced glutathione to a wide number of exogenous and endogenous hydrophobic electrophiles. May be involved in detoxification. The polypeptide is Glutathione S-transferase D4 (Drosophila melanogaster (Fruit fly)).